A 63-amino-acid polypeptide reads, in one-letter code: Large ribosomal subunit protein uL29 (63 aa).

The protein belongs to the universal ribosomal protein uL29 family.

This Bordetella pertussis (strain Tohama I / ATCC BAA-589 / NCTC 13251) protein is Large ribosomal subunit protein uL29.